A 214-amino-acid polypeptide reads, in one-letter code: Ribosomal RNA small subunit methyltransferase G (214 aa).

S-adenosyl-L-methionine-binding positions include Gly81, Met86, 132–133 (VE), and Arg147.

It belongs to the methyltransferase superfamily. RNA methyltransferase RsmG family.

It localises to the cytoplasm. The catalysed reaction is guanosine(527) in 16S rRNA + S-adenosyl-L-methionine = N(7)-methylguanosine(527) in 16S rRNA + S-adenosyl-L-homocysteine. In terms of biological role, specifically methylates the N7 position of guanine in position 527 of 16S rRNA. This chain is Ribosomal RNA small subunit methyltransferase G, found in Pseudomonas fluorescens (strain Pf0-1).